The following is a 393-amino-acid chain: Arginine biosynthesis bifunctional protein ArgJ (393 aa).

6 residues coordinate substrate: Thr145, Lys171, Thr182, Glu265, Asn388, and Ser393. The active-site Nucleophile is the Thr182.

Belongs to the ArgJ family. Heterotetramer of two alpha and two beta chains.

The protein localises to the cytoplasm. It catalyses the reaction N(2)-acetyl-L-ornithine + L-glutamate = N-acetyl-L-glutamate + L-ornithine. The catalysed reaction is L-glutamate + acetyl-CoA = N-acetyl-L-glutamate + CoA + H(+). Its pathway is amino-acid biosynthesis; L-arginine biosynthesis; L-ornithine and N-acetyl-L-glutamate from L-glutamate and N(2)-acetyl-L-ornithine (cyclic): step 1/1. It participates in amino-acid biosynthesis; L-arginine biosynthesis; N(2)-acetyl-L-ornithine from L-glutamate: step 1/4. Its function is as follows. Catalyzes two activities which are involved in the cyclic version of arginine biosynthesis: the synthesis of N-acetylglutamate from glutamate and acetyl-CoA as the acetyl donor, and of ornithine by transacetylation between N(2)-acetylornithine and glutamate. The polypeptide is Arginine biosynthesis bifunctional protein ArgJ (Nitratidesulfovibrio vulgaris (strain ATCC 29579 / DSM 644 / CCUG 34227 / NCIMB 8303 / VKM B-1760 / Hildenborough) (Desulfovibrio vulgaris)).